The chain runs to 512 residues: 2,3-bisphosphoglycerate-independent phosphoglycerate mutase (512 aa).

Mn(2+)-binding residues include Asp12 and Ser62. The Phosphoserine intermediate role is filled by Ser62. Residues His123, 153–154, Arg185, Arg191, 260–263, and Lys333 contribute to the substrate site; these read RD and RPDR. Positions 400, 404, 441, 442, and 460 each coordinate Mn(2+).

This sequence belongs to the BPG-independent phosphoglycerate mutase family. In terms of assembly, monomer. Mn(2+) is required as a cofactor.

The enzyme catalyses (2R)-2-phosphoglycerate = (2R)-3-phosphoglycerate. It participates in carbohydrate degradation; glycolysis; pyruvate from D-glyceraldehyde 3-phosphate: step 3/5. In terms of biological role, catalyzes the interconversion of 2-phosphoglycerate and 3-phosphoglycerate. This chain is 2,3-bisphosphoglycerate-independent phosphoglycerate mutase, found in Clostridium beijerinckii (strain ATCC 51743 / NCIMB 8052) (Clostridium acetobutylicum).